The chain runs to 616 residues: Formin-binding protein 1 (616 aa).

The segment at 1 to 79 (MSWGTELWDQ…CKAFLSTLNE (79 aa)) is required for self-association and induction of membrane tubulation. Positions 1 to 264 (MSWGTELWDQ…AAESIDQKND (264 aa)) constitute an F-BAR domain. An interaction with microtubules region spans residues 1-334 (MSWGTELWDQ…KKNKLMSLLT (334 aa)). N6-acetyllysine is present on residues lysine 66 and lysine 110. Positions 67-259 (YTACKAFLST…DGIVKAAESI (193 aa)) form a coiled coil. The tract at residues 251–616 (GIVKAAESID…VYLDKNAKGS (366 aa)) is required for self-association and induction of membrane tubulation. Disordered regions lie at residues 280–314 (GDIEFEDYTQPMKRTVSDNSLSSSKEGKPELRFGG) and 332–366 (LLTSPHQPPPPPPASASPSAVPNGPQSPKQPKEPL). Residues serine 296 and serine 299 each carry the phosphoserine modification. Residues 337–346 (HQPPPPPPAS) show a composition bias toward pro residues. A phosphoserine mark is found at serine 348 and serine 358. A coiled-coil region spans residues 398 to 490 (PEDFSNFPPE…VEGRLPARSE (93 aa)). The interaction with RND2 stretch occupies residues 399–551 (EDFSNFPPEQ…FDDEEPLPAI (153 aa)). One can recognise an REM-1 domain in the interval 403–480 (NFPPEQRRKK…AQKFEAWLAE (78 aa)). Residues 487–531 (ARSEQARRQSGLYDGQTHQTVTNCAQDRESPDGSYTEEQSQESEH) form a disordered region. The interaction with PDE6G stretch occupies residues 494–616 (RQSGLYDGQT…VYLDKNAKGS (123 aa)). Residue serine 496 is modified to Phosphoserine. Position 499 is a phosphotyrosine (tyrosine 499). Polar residues predominate over residues 502–511 (QTHQTVTNCA). The interval 513–616 (DRESPDGSYT…VYLDKNAKGS (104 aa)) is required for interaction with TNKS. Position 520 is a phosphoserine (serine 520). The interaction with DNM1 and DNM3 stretch occupies residues 534–616 (LAPDFDDEFD…VYLDKNAKGS (83 aa)). In terms of domain architecture, SH3 spans 549-610 (PAIGTCKALY…PTSYVEVYLD (62 aa)). An interaction with ARHGAP17, DAAM1, DIAPH1 and DIAPH2 region spans residues 549-616 (PAIGTCKALY…VYLDKNAKGS (68 aa)). Residues 552-608 (GTCKALYTFEGQNEGTISVVEGETLSVIEEDKGDGWTRIRRNEDEEGYVPTSYVEVY) are interaction with DNM2 and WASL. Positions 552-609 (GTCKALYTFEGQNEGTISVVEGETLSVIEEDKGDGWTRIRRNEDEEGYVPTSYVEVYL) are interaction with FASLG.

This sequence belongs to the FNBP1 family. Homodimerizes, the dimers can polymerize end-to-end to form filamentous structures. Interacts specifically with GTP-bound RND2 and CDC42. Interacts with AKAP9, ARHGAP17, DAAM1, DIAPH1, DIAPH2, DNM1, DNM2, DNM3, FASLG/FASL, microtubules, PDE6G, SNX2 and WASL/N-WASP. May interact with TNKS. As to expression, expressed in brain and testis.

It localises to the cytoplasm. Its subcellular location is the cytoskeleton. The protein localises to the cell cortex. The protein resides in the lysosome. It is found in the cytoplasmic vesicle. It localises to the cell membrane. Its subcellular location is the membrane. The protein localises to the clathrin-coated pit. Functionally, required to coordinate membrane tubulation with reorganization of the actin cytoskeleton during the late stage of clathrin-mediated endocytosis. Binds to lipids such as phosphatidylinositol 4,5-bisphosphate and phosphatidylserine and promotes membrane invagination and the formation of tubules. Also enhances actin polymerization via the recruitment of WASL/N-WASP, which in turn activates the Arp2/3 complex. Actin polymerization may promote the fission of membrane tubules to form endocytic vesicles. May act as a link between RND2 signaling and regulation of the actin cytoskeleton. May be required for the lysosomal retention of FASLG/FASL. The chain is Formin-binding protein 1 (Fnbp1) from Mus musculus (Mouse).